The following is a 321-amino-acid chain: Cysteine and histidine-rich domain-containing protein 1 (321 aa).

Zn(2+)-binding residues include Cys9, Cys14, Cys28, His31, Cys46, Cys47, Cys63, His68, Cys152, Cys157, Cys170, His173, Cys188, Cys189, Cys205, and His210. 2 CHORD domains span residues 9 to 68 and 152 to 210; these read CYHK…RGKH and CRNN…SGEH. A CS domain is found at 218 to 308; the sequence is VSKFREDWFS…KHGTGWPRLK (91 aa).

In terms of biological role, regulates centrosome duplication. Controls the secretion of the tyrosine kinase receptor let-23/EGFR from the endoplasmic reticulum and is required for the localization of let-23/EGFR to the plasma membrane of vulval precursor cells. It thus plays a role in positively regulating let/EGFR signaling, and anchor cell and vulval precursor cell alignment. Plays a role in vulval development and morphogenesis. This chain is Cysteine and histidine-rich domain-containing protein 1, found in Caenorhabditis elegans.